The sequence spans 318 residues: Serpentine receptor class delta-25 (318 aa).

7 helical membrane-spanning segments follow: residues 5–25, 38–58, 88–108, 126–146, 176–196, 226–246, and 258–278; these read LLHSVLSLVGILSNAFMMYLA, VVITIKTGTDILASSMSFFVM, HMFMLCFLEYDLVWLITSYLF, IAFYVFIPSMVHMGVWISIYI, ITLLTQLFITACLAVVAYTFI, TFKLILPSFIFLGITVFVAMF, and IVSVCFMFSPVCSPYAYIIFV.

Belongs to the nematode receptor-like protein srd family.

The protein resides in the membrane. This is Serpentine receptor class delta-25 (srd-25) from Caenorhabditis elegans.